The primary structure comprises 466 residues: Probable agmatine/putrescine antiporter AguD (466 aa).

12 helical membrane-spanning segments follow: residues 8 to 28 (FSLF…EAAA), 30 to 50 (VAAI…AFLL), 85 to 105 (ASWF…VLCP), 120 to 140 (ISLL…LYPV), 144 to 164 (VWIL…LGGL), 192 to 212 (LSFI…CTFA), 226 to 246 (IIIG…GIGV), 273 to 293 (WFIS…MVSW), 325 to 345 (WGAA…APLL), 350 to 370 (LFWS…IPVF), 398 to 418 (VYMA…AIPL), and 426 to 446 (TEQL…ELII).

It belongs to the amino acid-polyamine-organocation (APC) superfamily. Glutamate:GABA antiporter (GGA) (TC 2.A.3.7) family.

It is found in the cell membrane. In terms of biological role, probably catalyzes agmatine/putrescine exchange. This Lactococcus lactis subsp. lactis (strain IL1403) (Streptococcus lactis) protein is Probable agmatine/putrescine antiporter AguD.